A 160-amino-acid chain; its full sequence is Phosphopantetheine adenylyltransferase (160 aa).

Position 9 (Ser-9) interacts with substrate. ATP is bound by residues 9–10 (SF) and His-17. Substrate is bound by residues Lys-41, Leu-73, and Lys-87. ATP is bound by residues 88 to 90 (GLR), Glu-98, and 123 to 129 (YGYLSSS).

It belongs to the bacterial CoaD family. As to quaternary structure, homohexamer. It depends on Mg(2+) as a cofactor.

The protein localises to the cytoplasm. It carries out the reaction (R)-4'-phosphopantetheine + ATP + H(+) = 3'-dephospho-CoA + diphosphate. Its pathway is cofactor biosynthesis; coenzyme A biosynthesis; CoA from (R)-pantothenate: step 4/5. In terms of biological role, reversibly transfers an adenylyl group from ATP to 4'-phosphopantetheine, yielding dephospho-CoA (dPCoA) and pyrophosphate. The sequence is that of Phosphopantetheine adenylyltransferase from Caldanaerobacter subterraneus subsp. tengcongensis (strain DSM 15242 / JCM 11007 / NBRC 100824 / MB4) (Thermoanaerobacter tengcongensis).